A 271-amino-acid polypeptide reads, in one-letter code: Phosphate import ATP-binding protein PstB (271 aa).

In terms of domain architecture, ABC transporter spans 24 to 266 (MIGNDVSVYY…PDDQRTQDYI (243 aa)). Residue 56 to 63 (GPSGCGKS) participates in ATP binding.

It belongs to the ABC transporter superfamily. Phosphate importer (TC 3.A.1.7) family. As to quaternary structure, the complex is composed of two ATP-binding proteins (PstB), two transmembrane proteins (PstC and PstA) and a solute-binding protein (PstS).

The protein resides in the cell inner membrane. It carries out the reaction phosphate(out) + ATP + H2O = ADP + 2 phosphate(in) + H(+). Functionally, part of the ABC transporter complex PstSACB involved in phosphate import. Responsible for energy coupling to the transport system. The chain is Phosphate import ATP-binding protein PstB from Rhizobium meliloti (strain 1021) (Ensifer meliloti).